A 93-amino-acid polypeptide reads, in one-letter code: Leydig cell tumor 10 kDa protein (93 aa).

The segment at 1 to 41 (MAQGQRKFQAQKPKSKAAAAERSRGPRKGGRVIGPKKARVV) is disordered. The segment covering 7-18 (KFQAQKPKSKAA) has biased composition (low complexity). Basic residues predominate over residues 25-39 (GPRKGGRVIGPKKAR).

Belongs to the UPF0390 family. Leydig cell tumor, testis and placenta.

May have a potential role in hypercalcemia of malignancy. The sequence is that of Leydig cell tumor 10 kDa protein from Rattus norvegicus (Rat).